The following is a 243-amino-acid chain: Probable transcriptional regulatory protein BDU_30 (243 aa).

Belongs to the TACO1 family.

It is found in the cytoplasm. The sequence is that of Probable transcriptional regulatory protein BDU_30 from Borrelia duttonii (strain Ly).